Reading from the N-terminus, the 140-residue chain is Small ribosomal subunit protein uS12 (140 aa).

The interval 33-55 is disordered; it reads KEQTNVSSPQKRGVCTRVGTMTP. Residue Asp102 is modified to 3-methylthioaspartic acid.

It belongs to the universal ribosomal protein uS12 family. Part of the 30S ribosomal subunit. Contacts proteins S8 and S17. May interact with IF1 in the 30S initiation complex.

With S4 and S5 plays an important role in translational accuracy. Its function is as follows. Interacts with and stabilizes bases of the 16S rRNA that are involved in tRNA selection in the A site and with the mRNA backbone. Located at the interface of the 30S and 50S subunits, it traverses the body of the 30S subunit contacting proteins on the other side and probably holding the rRNA structure together. The combined cluster of proteins S8, S12 and S17 appears to hold together the shoulder and platform of the 30S subunit. In Geobacillus thermodenitrificans (strain NG80-2), this protein is Small ribosomal subunit protein uS12.